The sequence spans 534 residues: Acetyltransferase MATC1 (534 aa).

Active-site proton acceptor residues include histidine 186 and aspartate 459.

This sequence belongs to the plant acyltransferase family.

It localises to the cell membrane. The protein operates within secondary metabolite biosynthesis. Its function is as follows. Acetyltransferase; part of the gene cluster that mediates the biosynthesis of mannosylerythritol lipids (MELs), surface-active substances that enhance the availability of water-insoluble substrates. Mannosylerythritol lipid production is responsible for hemolytic activity of Ustilago maydis. Depending on the number of acetyl groups, mannosylerythritol lipids can be differentiated into MEL A (fully acetylated), MEL B and MEL C (monoacetylated at R-6 and R-4, respectively), and the fully deacetylated MEL D. The first step in the pathway is the generation of mannosylerythritol by the glycosyltransferase EMT1 which catalyzes the transfer of GDP-mannose to the C-4 atom of meso-erythritol. This reaction has to be stereospecific, since only mannosyl-D-erythritol is generated. The produced disaccharide is subsequently acylated with fatty acids of various lengths derived from the peroxisomal beta-oxidation by the peroxisomal acyltransferases MAC1 and MAC2 at positions C-2 and C-3, repectively. The existence of MEL derivatives which carry an acetyl group at C-2 implies that at least MAC1 also accepts acetyl-CoA as a donor. The final step of MEL biosynthesis is the acetylation of the fully acylated mannosylerythritol lipids catalyzed by the acetyl-CoA-dependent acetyltransferase MAT1. MAT1 displays a relaxed regioselectivity and is able to transfer acetylgroups to both positions C-4 and C-6 of the mannosyl moiety. The protein is Acetyltransferase MATC1 of Mycosarcoma maydis (Corn smut fungus).